A 270-amino-acid chain; its full sequence is Formamidopyrimidine-DNA glycosylase (270 aa).

The Schiff-base intermediate with DNA role is filled by Pro2. Glu3 functions as the Proton donor in the catalytic mechanism. The Proton donor; for beta-elimination activity role is filled by Lys58. DNA is bound by residues His90, Arg109, and Arg152. An FPG-type zinc finger spans residues 237–270 (RVYGREGEPCQCGGVVKRIVQGGRSTFFCPRCQK). Arg260 (proton donor; for delta-elimination activity) is an active-site residue.

The protein belongs to the FPG family. Monomer. Requires Zn(2+) as cofactor.

The catalysed reaction is Hydrolysis of DNA containing ring-opened 7-methylguanine residues, releasing 2,6-diamino-4-hydroxy-5-(N-methyl)formamidopyrimidine.. It catalyses the reaction 2'-deoxyribonucleotide-(2'-deoxyribose 5'-phosphate)-2'-deoxyribonucleotide-DNA = a 3'-end 2'-deoxyribonucleotide-(2,3-dehydro-2,3-deoxyribose 5'-phosphate)-DNA + a 5'-end 5'-phospho-2'-deoxyribonucleoside-DNA + H(+). Its function is as follows. Involved in base excision repair of DNA damaged by oxidation or by mutagenic agents. Acts as a DNA glycosylase that recognizes and removes damaged bases. Has a preference for oxidized purines, such as 7,8-dihydro-8-oxoguanine (8-oxoG). Has AP (apurinic/apyrimidinic) lyase activity and introduces nicks in the DNA strand. Cleaves the DNA backbone by beta-delta elimination to generate a single-strand break at the site of the removed base with both 3'- and 5'-phosphates. This chain is Formamidopyrimidine-DNA glycosylase, found in Novosphingobium aromaticivorans (strain ATCC 700278 / DSM 12444 / CCUG 56034 / CIP 105152 / NBRC 16084 / F199).